The primary structure comprises 180 residues: Large ribosomal subunit protein uL5 (180 aa).

It belongs to the universal ribosomal protein uL5 family. Part of the 50S ribosomal subunit; part of the 5S rRNA/L5/L18/L25 subcomplex. Contacts the 5S rRNA and the P site tRNA. Forms a bridge to the 30S subunit in the 70S ribosome.

Its function is as follows. This is one of the proteins that bind and probably mediate the attachment of the 5S RNA into the large ribosomal subunit, where it forms part of the central protuberance. In the 70S ribosome it contacts protein S13 of the 30S subunit (bridge B1b), connecting the 2 subunits; this bridge is implicated in subunit movement. Contacts the P site tRNA; the 5S rRNA and some of its associated proteins might help stabilize positioning of ribosome-bound tRNAs. In Mesoplasma florum (strain ATCC 33453 / NBRC 100688 / NCTC 11704 / L1) (Acholeplasma florum), this protein is Large ribosomal subunit protein uL5.